A 551-amino-acid polypeptide reads, in one-letter code: Membrane protein insertase YidC (551 aa).

Residues 3-23 form a helical membrane-spanning segment; sequence ANHIRILLLVTIAIMLISLMG. Over residues 30-43 the composition is skewed to low complexity; that stretch reads PSNSSQSQTTQTQQ. Residues 30 to 61 are disordered; sequence PSNSSQSQTTQTQQDNSHYNSDTPATTNVSTS. Polar residues predominate over residues 44-61; that stretch reads DNSHYNSDTPATTNVSTS. 3 helical membrane passes run 361–381, 431–451, and 504–524; these read LVGN…LIFY, LSGC…YWVL, and IMMF…SGLV.

The protein belongs to the OXA1/ALB3/YidC family. Type 1 subfamily. Interacts with the Sec translocase complex via SecD. Specifically interacts with transmembrane segments of nascent integral membrane proteins during membrane integration.

It is found in the cell inner membrane. Required for the insertion and/or proper folding and/or complex formation of integral membrane proteins into the membrane. Involved in integration of membrane proteins that insert both dependently and independently of the Sec translocase complex, as well as at least some lipoproteins. Aids folding of multispanning membrane proteins. The protein is Membrane protein insertase YidC of Francisella philomiragia subsp. philomiragia (strain ATCC 25017 / CCUG 19701 / FSC 153 / O#319-036).